The chain runs to 340 residues: Phenylalanine--tRNA ligase alpha subunit (340 aa).

Mg(2+) is bound at residue E255.

Belongs to the class-II aminoacyl-tRNA synthetase family. Phe-tRNA synthetase alpha subunit type 1 subfamily. As to quaternary structure, tetramer of two alpha and two beta subunits. The cofactor is Mg(2+).

Its subcellular location is the cytoplasm. The catalysed reaction is tRNA(Phe) + L-phenylalanine + ATP = L-phenylalanyl-tRNA(Phe) + AMP + diphosphate + H(+). This is Phenylalanine--tRNA ligase alpha subunit from Desulfitobacterium hafniense (strain Y51).